The following is a 309-amino-acid chain: Olfactory receptor 1A2 (309 aa).

At 1 to 25 (MKKENQSFNLDFILLGVTSQQEQNN) the chain is on the extracellular side. The N-linked (GlcNAc...) asparagine glycan is linked to asparagine 5. A helical transmembrane segment spans residues 26-49 (VFFVIFLCIYPITLTGNLLIILAI). Residues 50–57 (CADIRLHN) lie on the Cytoplasmic side of the membrane. Residues 58–79 (PMYFLLANLSLVDIIFSSVTIP) traverse the membrane as a helical segment. Topologically, residues 80–100 (KVLANHLLGSKFISFGGCLMQ) are extracellular. Cysteine 97 and cysteine 189 are disulfide-bonded. Residues 101–120 (MYFMIALAKADSYTLAAMAY) form a helical membrane-spanning segment. Residues 121 to 139 (DRAVAISCPLHYTTIMSPR) lie on the Cytoplasmic side of the membrane. The chain crosses the membrane as a helical span at residues 140–158 (SCILLIAGSWVIGNTSALP). The Extracellular portion of the chain corresponds to 159–195 (HTLLTASLSFCGNQEVANFYCDIMPLLKLSCSDVHFN). The chain crosses the membrane as a helical span at residues 196–218 (VKMMYLGVGVFSLPLLCIIVSYV). Over 219–235 (QVFSTVFQVPSTKSLFK) the chain is Cytoplasmic. The chain crosses the membrane as a helical span at residues 236-258 (AFCTCGSHLTVVFLYYGTTMGMY). Topologically, residues 259-270 (FRPLTSYSPKDA) are extracellular. A helical membrane pass occupies residues 271–290 (VITVMYVAVTPALNPFIYSL). The Cytoplasmic portion of the chain corresponds to 291-309 (RNWDMKAALQKLFSKRISS).

The protein belongs to the G-protein coupled receptor 1 family.

Its subcellular location is the cell membrane. Its function is as follows. Odorant receptor. The polypeptide is Olfactory receptor 1A2 (OR1A2) (Homo sapiens (Human)).